The chain runs to 494 residues: Sugar phosphate exchanger 3 (494 aa).

A helical membrane pass occupies residues 16-36 (FSHHHVVVFLLTFFSYSLLHA). A glycan (N-linked (GlcNAc...) asparagine) is linked at Asn58. Helical transmembrane passes span 81–101 (TLFL…GLFI), 113–133 (WVLS…GALT), 147–167 (LWIV…AVMG), 177–197 (VVFG…ACLA), and 209–229 (FLVT…GLLV). A glycan (N-linked (GlcNAc...) asparagine) is linked at Asn266. 6 consecutive transmembrane segments (helical) span residues 297-317 (LAYA…PFYL), 333-353 (IWYD…SDVL), 357-377 (APVL…YSRS), 386-406 (LLMT…SSAI), 428-448 (GIVD…VSLI), and 452-472 (LGWM…IVFI).

This sequence belongs to the major facilitator superfamily. Organophosphate:Pi antiporter (OPA) (TC 2.A.1.4) family. In terms of assembly, interacts with ATRAID; the interaction is direct and both proteins are mutually dependent for their stability. Post-translationally, glycosylated. In terms of tissue distribution, expressed in liver, kidney, intestine and pancreas.

The protein resides in the endoplasmic reticulum membrane. Its subcellular location is the lysosome membrane. Unlike the other SLC37 members, lacks glucose-6-phosphate antiporter activity. In osteoclasts, forms a transporter complex with ATRAID for nitrogen-containing-bisphophonates (N-BPs) required for releasing N-BP molecules that have trafficked to lysosomes through fluid-phase endocytosis into the cytosol. This is Sugar phosphate exchanger 3 from Homo sapiens (Human).